The following is a 152-amino-acid chain: MAAQLLFTDEEVTEFKRRFKNKDTDKSKSITAEELGEFFKSTGKSYTDKQIDKMISDVDTDESGTIDFSEMLMGIAEQMVKWTWKEEHYTKAFDDMDKDGNGSLSPQELREALSASKPPMKRKKIKAIIQKADANKDGKIDREEFMKLIKSC.

EF-hand domains follow at residues 10 to 45 (EEVT…TGKS), 46 to 81 (YTDK…QMVK), 84 to 119 (WKEE…SKPP), and 120 to 152 (MKRK…IKSC). Residues Asp23, Asp25, Ser27, Ser29, Glu34, Asp59, Asp61, Ser63, Thr65, Glu70, Asp97, Asp99, Asn101, Ser103, Glu108, Asp133, Asn135, Asp137, Lys139, and Glu144 each contribute to the Ca(2+) site. A disordered region spans residues 95–121 (DMDKDGNGSLSPQELREALSASKPPMK).

In terms of tissue distribution, found in cell lineages giving rise to the aboral ectoderm, a squamous epithelium covering the surface of the late stage embryo and larva.

Functionally, calcium-binding protein involved in larval development and metamorphosis. Likely to function as calcium buffers mediating the transport of calcium from the sea water to the blastocoel where calcium is required for skeleton formation. This chain is Calcium-binding protein SPEC 1A (SPEC1), found in Strongylocentrotus purpuratus (Purple sea urchin).